A 466-amino-acid polypeptide reads, in one-letter code: ATP synthase subunit beta (466 aa).

155–162 contributes to the ATP binding site; it reads GGAGVGKT.

It belongs to the ATPase alpha/beta chains family. In terms of assembly, F-type ATPases have 2 components, CF(1) - the catalytic core - and CF(0) - the membrane proton channel. CF(1) has five subunits: alpha(3), beta(3), gamma(1), delta(1), epsilon(1). CF(0) has three main subunits: a(1), b(2) and c(9-12). The alpha and beta chains form an alternating ring which encloses part of the gamma chain. CF(1) is attached to CF(0) by a central stalk formed by the gamma and epsilon chains, while a peripheral stalk is formed by the delta and b chains.

It localises to the cell inner membrane. It carries out the reaction ATP + H2O + 4 H(+)(in) = ADP + phosphate + 5 H(+)(out). In terms of biological role, produces ATP from ADP in the presence of a proton gradient across the membrane. The catalytic sites are hosted primarily by the beta subunits. This is ATP synthase subunit beta from Bordetella pertussis (strain Tohama I / ATCC BAA-589 / NCTC 13251).